A 542-amino-acid polypeptide reads, in one-letter code: Importin subunit alpha (542 aa).

Position 1 is an N-acetylmethionine (M1). The span at 1–11 (MDNGTDSSTSK) shows a compositional bias: polar residues. Residues 1 to 65 (MDNGTDSSTS…RNFIPPTDGA (65 aa)) enclose the IBB domain. Positions 1–77 (MDNGTDSSTS…DEEDESSVSA (77 aa)) are disordered. Residues 27 to 53 (FSADELRRRRDTQQVELRKAKRDEALA) are compositionally biased toward basic and acidic residues. One copy of the ARM 1; truncated repeat lies at 89-122 (LPQMTQQLNSDDMQEQLSATVKFRQILSREHRPP). ARM repeat units follow at residues 123 to 162 (IDVVIQAGVVPRLVEFMRENQPEMLQLEAAWALTNIASGT), 163 to 204 (SAQT…AGDS), 205 to 251 (TDYR…PQPD), 252 to 288 (WSVVSQALPTLAKLIYSMDTETLVDACWAISYLSDGP), 289 to 330 (QEAI…VTGN), 331 to 372 (DLQT…TAGN), 373 to 417 (TEQI…GLQR), and 418 to 471 (PDII…LNIN). The tract at residues 209 to 335 (DYVLQCNAME…IVTGNDLQTQ (127 aa)) is NLS binding site 1. The interval 419–505 (DIIRYLVSQG…KIYEKAYKII (87 aa)) is NLS binding site 2. One copy of the ARM 10; atypical repeat lies at 472-508 (ENADFIEKAGGMEKIFNCQQNENDKIYEKAYKIIETY).

This sequence belongs to the importin alpha family. As to quaternary structure, forms a complex with an importin beta subunit. In the nucleus, interacts with NUP2 which accelerate release of NLSs, NUP2 is subsequently displaced by CSE1:RanGTP which mediates re-export and recycling. Interacts with HEH2, SHE2, and STS1.

It is found in the cytoplasm. Its subcellular location is the perinuclear region. In terms of biological role, functions in nuclear protein import as an adapter protein for importin beta nuclear receptors. Binds specifically and directly to substrates containing either a simple or bipartite NLS motif. Promotes docking of import substrates to the nuclear envelope. Together with importin beta KAP95, mediates nuclear import of transcription factor GCN4. Together with tethering factor STS1, targets the proteasome to the nucleus. The sequence is that of Importin subunit alpha (SRP1) from Saccharomyces cerevisiae (strain ATCC 204508 / S288c) (Baker's yeast).